The sequence spans 541 residues: Putative nucleobase-ascorbate transporter 10 (541 aa).

12 consecutive transmembrane segments (helical) span residues 52-72, 79-99, 101-121, 141-161, 173-193, 196-216, 235-255, 299-319, 376-396, 397-417, 433-453, and 476-496; these read LLSL…MGGG, VIQT…FFGT, LPVI…IIYS, IQGA…LGVW, IAPL…PLLA, VEVG…LPRF, GMIL…SSGV, SFAM…LFYA, RVIQ…KFGA, FFAS…LCFV, FNIK…PQYF, and VIFM…DCTL.

This sequence belongs to the nucleobase:cation symporter-2 (NCS2) (TC 2.A.40) family.

It is found in the membrane. This Arabidopsis thaliana (Mouse-ear cress) protein is Putative nucleobase-ascorbate transporter 10 (NAT10).